Consider the following 558-residue polypeptide: DNA ligase B (558 aa).

Lys126 (N6-AMP-lysine intermediate) is an active-site residue.

It belongs to the NAD-dependent DNA ligase family. LigB subfamily.

It catalyses the reaction NAD(+) + (deoxyribonucleotide)n-3'-hydroxyl + 5'-phospho-(deoxyribonucleotide)m = (deoxyribonucleotide)n+m + AMP + beta-nicotinamide D-nucleotide.. In terms of biological role, catalyzes the formation of phosphodiester linkages between 5'-phosphoryl and 3'-hydroxyl groups in double-stranded DNA using NAD as a coenzyme and as the energy source for the reaction. The sequence is that of DNA ligase B from Pseudomonas fluorescens (strain Pf0-1).